Consider the following 341-residue polypeptide: MRILGIETSCDETGIAIYDDQLGLLSHQLYSQVELHADYGGVVPELASRDHVRKTIPLIKEALVAANCTKESLDGIAYTAGPGLVGALLVGSCIGRSLAYAWNIPAIAVHHMEGHLLAPMLEENRPEFPFLALLVSGGHTLMVEVENIGEYQVLGESIDDAAGEAFDKTAKLLGLDYPGGPRLAKLAEKGEPKRFIFPRPMTTKPGLDFSFSGLKTFAANTIAKEGKDPQTQADIALAFQDAVIDTVAIKCKRALKQTGLKRLVVAGGVSANLSLRSQLAVLMKSLGGEVFYPRNEFCTDNGAMIAYAGMQRLKAGHFEGLGIQAKPRWPLDQLLSVRSEL.

2 residues coordinate Fe cation: H111 and H115. Residues 134-138 (LVSGG), D167, G180, and N272 contribute to the substrate site. Position 300 (D300) interacts with Fe cation.

Belongs to the KAE1 / TsaD family. Fe(2+) serves as cofactor.

The protein resides in the cytoplasm. It catalyses the reaction L-threonylcarbamoyladenylate + adenosine(37) in tRNA = N(6)-L-threonylcarbamoyladenosine(37) in tRNA + AMP + H(+). Its function is as follows. Required for the formation of a threonylcarbamoyl group on adenosine at position 37 (t(6)A37) in tRNAs that read codons beginning with adenine. Is involved in the transfer of the threonylcarbamoyl moiety of threonylcarbamoyl-AMP (TC-AMP) to the N6 group of A37, together with TsaE and TsaB. TsaD likely plays a direct catalytic role in this reaction. In Psychromonas ingrahamii (strain DSM 17664 / CCUG 51855 / 37), this protein is tRNA N6-adenosine threonylcarbamoyltransferase.